The sequence spans 262 residues: Fibroin light chain (262 aa).

An N-terminal signal peptide occupies residues 1 to 16 (MKPIFLVLLVATSAYA). Ser-19 carries the N-acetylserine; in short form modification. Residues Cys-101 and Cys-160 are joined by a disulfide bond.

As to quaternary structure, silk fibroin elementary unit consists in a disulfide-linked heavy and light chain and a p25 glycoprotein in molar ratios of 6:6:1. This results in a complex of approximately 2.3 MDa. In terms of processing, the interchain disulfide bridge is essential for the intracellular transport and secretion of fibroin. Post-translationally, partially N-terminally processed to yield a short form which lacks the first two residues of the long form. Produced exclusively in the posterior (PSG) section of silk glands, which are essentially modified salivary glands.

It localises to the secreted. Functionally, it is likely that the major role of L-chain is to prevent the retention of H-chain in ER by forming the disulfide linkage. This is Fibroin light chain (FIBL) from Bombyx mori (Silk moth).